We begin with the raw amino-acid sequence, 114 residues long: MDSKWAALLLLLLLLLNWGHTEEAGSWGEDQVFAGEDKGPHPPQYAHIPDRIQTPGSLFRVLLQAMDTPRRSPAFLFQPQRFGRSAWGSWSKEQLNPQARQFWSLAAPQRFGKK.

The signal sequence occupies residues 1 to 21 (MDSKWAALLLLLLLLLNWGHT). A propeptide spanning residues 22-69 (EEAGSWGEDQVFAGEDKGPHPPQYAHIPDRIQTPGSLFRVLLQAMDTP) is cleaved from the precursor. Phe-82 bears the Phenylalanine amide mark. Positions 85–100 (SAWGSWSKEQLNPQAR) are excised as a propeptide. Phe-111 is subject to Phenylalanine amide.

It belongs to the FARP (FMRFamide related peptide) family.

The protein localises to the secreted. Morphine modulating peptides. Have wide-ranging physiologic effects, including the modulation of morphine-induced analgesia, elevation of arterial blood pressure, and increased somatostatin secretion from the pancreas. Neuropeptide FF potentiates and sensitizes ASIC1 and ASIC3 channels. The chain is Pro-FMRFamide-related neuropeptide FF (Npff) from Mus musculus (Mouse).